A 192-amino-acid polypeptide reads, in one-letter code: Leucyl/phenylalanyl-tRNA--protein transferase (192 aa).

It belongs to the L/F-transferase family.

The protein localises to the cytoplasm. It catalyses the reaction N-terminal L-lysyl-[protein] + L-leucyl-tRNA(Leu) = N-terminal L-leucyl-L-lysyl-[protein] + tRNA(Leu) + H(+). It carries out the reaction N-terminal L-arginyl-[protein] + L-leucyl-tRNA(Leu) = N-terminal L-leucyl-L-arginyl-[protein] + tRNA(Leu) + H(+). The enzyme catalyses L-phenylalanyl-tRNA(Phe) + an N-terminal L-alpha-aminoacyl-[protein] = an N-terminal L-phenylalanyl-L-alpha-aminoacyl-[protein] + tRNA(Phe). Functionally, functions in the N-end rule pathway of protein degradation where it conjugates Leu, Phe and, less efficiently, Met from aminoacyl-tRNAs to the N-termini of proteins containing an N-terminal arginine or lysine. The polypeptide is Leucyl/phenylalanyl-tRNA--protein transferase (Synechococcus sp. (strain JA-3-3Ab) (Cyanobacteria bacterium Yellowstone A-Prime)).